The primary structure comprises 210 residues: Outer-membrane lipoprotein LolB (210 aa).

A signal peptide spans 1–19 (MNHLKSFFTALVAGFILTA). The N-palmitoyl cysteine moiety is linked to residue Cys20. Cys20 carries the S-diacylglycerol cysteine lipid modification.

The protein belongs to the LolB family. In terms of assembly, monomer.

It localises to the cell outer membrane. Functionally, plays a critical role in the incorporation of lipoproteins in the outer membrane after they are released by the LolA protein. This is Outer-membrane lipoprotein LolB from Mannheimia succiniciproducens (strain KCTC 0769BP / MBEL55E).